Consider the following 122-residue polypeptide: Large ribosomal subunit protein bL19c (122 aa).

Belongs to the bacterial ribosomal protein bL19 family.

Its subcellular location is the plastid. It localises to the chloroplast. The chain is Large ribosomal subunit protein bL19c (rpl19) from Rhodomonas salina (Cryptomonas salina).